Here is a 106-residue protein sequence, read N- to C-terminus: V-type proton ATPase subunit G2 (106 aa).

The residue at position 1 (methionine 1) is an N-acetylmethionine. A disordered region spans residues 31–67 (LKQAKEEAETEVAEHKTSTEQGFQRKLEATSGDSGAN). The segment covering 33 to 58 (QAKEEAETEVAEHKTSTEQGFQRKLE) has biased composition (basic and acidic residues).

Belongs to the V-ATPase G subunit family. V-ATPase is a heteromultimeric enzyme composed of a peripheral catalytic V1 complex (components A to H) attached to an integral membrane V0 proton pore complex (components: a, c, c'', d and e).

The protein resides in the vacuole membrane. Catalytic subunit of the peripheral V1 complex of vacuolar ATPase (V-ATPase). V-ATPase is responsible for acidifying a variety of intracellular compartments in eukaryotic cells. This is V-type proton ATPase subunit G2 (VHA-G2) from Arabidopsis thaliana (Mouse-ear cress).